The following is an 872-amino-acid chain: Exoglucanase A (872 aa).

Positions Met-1 to Ala-40 are cleaved as a signal peptide. The interval Ala-41–Glu-477 is catalytic. Disulfide bonds link Cys-140-Cys-202 and Cys-374-Cys-428. The Proton donor role is filled by Asp-188. The active-site Nucleophile is Asp-410. Fibronectin type-III domains follow at residues Val-484–Gly-569, Val-579–Gly-667, and Val-677–Ala-765. The 110-residue stretch at Gln-763–Gly-872 folds into the CBM2 domain. Cysteines 770 and 869 form a disulfide.

Belongs to the glycosyl hydrolase 6 (cellulase B) family.

It carries out the reaction Hydrolysis of (1-&gt;4)-beta-D-glucosidic linkages in cellulose and cellotetraose, releasing cellobiose from the non-reducing ends of the chains.. This enzyme hydrolyzes 1,4-beta-D-glucosidic linkages of cellulose. Weak activity against carboxymethylcellulose, bacterial microcrystalline cellulose and barley beta-glucan. Also has weak endoglucanase activity. Hydrolyzes glucosidic bonds with inversion of anomeric configuration. This chain is Exoglucanase A (cbhA), found in Cellulomonas fimi (strain ATCC 484 / DSM 20113 / JCM 1341 / CCUG 24087 / LMG 16345 / NBRC 15513 / NCIMB 8980 / NCTC 7547 / NRS-133).